The sequence spans 184 residues: ATP synthase subunit b, chloroplastic (184 aa).

Residues 27–49 form a helical membrane-spanning segment; the sequence is LATNPINLSVVLGVLIFFGKGVL.

The protein belongs to the ATPase B chain family. F-type ATPases have 2 components, F(1) - the catalytic core - and F(0) - the membrane proton channel. F(1) has five subunits: alpha(3), beta(3), gamma(1), delta(1), epsilon(1). F(0) has four main subunits: a(1), b(1), b'(1) and c(10-14). The alpha and beta chains form an alternating ring which encloses part of the gamma chain. F(1) is attached to F(0) by a central stalk formed by the gamma and epsilon chains, while a peripheral stalk is formed by the delta, b and b' chains.

It is found in the plastid. It localises to the chloroplast thylakoid membrane. Functionally, f(1)F(0) ATP synthase produces ATP from ADP in the presence of a proton or sodium gradient. F-type ATPases consist of two structural domains, F(1) containing the extramembraneous catalytic core and F(0) containing the membrane proton channel, linked together by a central stalk and a peripheral stalk. During catalysis, ATP synthesis in the catalytic domain of F(1) is coupled via a rotary mechanism of the central stalk subunits to proton translocation. In terms of biological role, component of the F(0) channel, it forms part of the peripheral stalk, linking F(1) to F(0). In Ceratophyllum demersum (Rigid hornwort), this protein is ATP synthase subunit b, chloroplastic.